A 181-amino-acid chain; its full sequence is CDP-diacylglycerol--glycerol-3-phosphate 3-phosphatidyltransferase (181 aa).

The next 4 helical transmembrane spans lie at 8–28, 35–55, 64–84, and 148–168; these read PNYL…LFYI, KLGA…GYIA, FGKM…TIML, and IIYL…LTII.

The protein belongs to the CDP-alcohol phosphatidyltransferase class-I family.

Its subcellular location is the cell membrane. It catalyses the reaction a CDP-1,2-diacyl-sn-glycerol + sn-glycerol 3-phosphate = a 1,2-diacyl-sn-glycero-3-phospho-(1'-sn-glycero-3'-phosphate) + CMP + H(+). Its pathway is phospholipid metabolism; phosphatidylglycerol biosynthesis; phosphatidylglycerol from CDP-diacylglycerol: step 1/2. Functionally, this protein catalyzes the committed step to the synthesis of the acidic phospholipids. The protein is CDP-diacylglycerol--glycerol-3-phosphate 3-phosphatidyltransferase (pgsA) of Rickettsia prowazekii (strain Madrid E).